The chain runs to 1116 residues: cGMP-specific 3',5'-cyclic phosphodiesterase (1116 aa).

2 disordered regions span residues 1 to 36 and 82 to 136; these read MTDV…NGAA and KSEC…ATQQ. Over residues 15–28 the composition is skewed to low complexity; the sequence is VSSTSSEVAVETTS. Polar residues predominate over residues 86–136; sequence HSQSNNNQHVETAPSKQSSDSEASAPTTVSIPSANAKINSSSSGKTTATQQ. 2 consecutive GAF domains span residues 241–393 and 425–611; these read DIDV…GIGI and NLEC…GLGI. The 324-residue stretch at 641–964 folds into the PDEase domain; that stretch reads SQDQTEKLAQ…RNWQDLAEKV (324 aa). Histidine 717 (proton donor) is an active-site residue. A divalent metal cation is bound by residues histidine 721, histidine 757, aspartate 758, and aspartate 868. Disordered stretches follow at residues 1005–1031 and 1067–1116; these read QHGG…LSIK and HVSE…CALL. Composition is skewed to basic and acidic residues over residues 1014 to 1023 and 1067 to 1076; these read EDTHTPEHQR and HVSEDMDDKS. The segment covering 1085-1103 has biased composition (low complexity); it reads SGSVGRMSASSSTSSAGTV. Residues 1106 to 1116 are compositionally biased toward basic residues; it reads SKKRSKLCALL. Cysteine 1113 bears the Cysteine methyl ester mark. The S-farnesyl cysteine moiety is linked to residue cysteine 1113. Positions 1114–1116 are cleaved as a propeptide — removed in mature form; the sequence is ALL.

The protein belongs to the cyclic nucleotide phosphodiesterase family. In terms of assembly, interacts with PrBP. Requires a divalent metal cation as cofactor.

The protein resides in the cell membrane. It catalyses the reaction 3',5'-cyclic GMP + H2O = GMP + H(+). Has a role regulating cGMP transport in Malpighian tubule principal cells. The sequence is that of cGMP-specific 3',5'-cyclic phosphodiesterase from Drosophila mojavensis (Fruit fly).